The sequence spans 439 residues: GTPase Obg (439 aa).

Positions 3–162 constitute an Obg domain; the sequence is GEFYDSARIF…REIELELKLL (160 aa). Positions 163–333 constitute an OBG-type G domain; that stretch reads ADVGLIGFPN…LLQRVAERLR (171 aa). GTP is bound by residues 169–176, 194–198, 215–218, 285–288, and 314–316; these read GFPNAGKS, FTTLQ, DIPG, NKAD, and SAA. Residues Ser-176 and Thr-196 each contribute to the Mg(2+) site. The 78-residue stretch at 351–428 folds into the OCT domain; the sequence is VPEVDERLYT…IEQAAFDWED (78 aa).

The protein belongs to the TRAFAC class OBG-HflX-like GTPase superfamily. OBG GTPase family. In terms of assembly, monomer. The cofactor is Mg(2+).

Its subcellular location is the cytoplasm. Its function is as follows. An essential GTPase which binds GTP, GDP and possibly (p)ppGpp with moderate affinity, with high nucleotide exchange rates and a fairly low GTP hydrolysis rate. Plays a role in control of the cell cycle, stress response, ribosome biogenesis and in those bacteria that undergo differentiation, in morphogenesis control. The chain is GTPase Obg from Roseiflexus castenholzii (strain DSM 13941 / HLO8).